Reading from the N-terminus, the 354-residue chain is Kelch domain-containing protein 8B (354 aa).

Kelch repeat units follow at residues 1–31 (MAAG…HQDG), 32–79 (HLLV…VLGK), 81–127 (VLVV…ERDG), 128–175 (MVYA…LHGN), 176–222 (KIYV…MAEG), 224–281 (VFSL…SLGG), 282–329 (NIVA…QAGP), and 331–354 (LFVI…RDGV).

It localises to the cytoplasm. It is found in the midbody. Its function is as follows. Involved in pinching off the separated nuclei at the cleavage furrow and in cytokinesis. Required for mitotic integrity and maintenance of chromosomal stability. Protects cells against mitotic errors, centrosomal amplification, micronucleus formation and aneuploidy. Plays a key role of midbody function involving abscission of the daughter cells during cytokinesis and appropriate chromosomal and nuclear segregation into the daughter cells. The protein is Kelch domain-containing protein 8B (Klhdc8b) of Mus musculus (Mouse).